The sequence spans 626 residues: L-amino-acid oxidase 4 (626 aa).

An N-terminal signal peptide occupies residues 1–18 (KSFFRSLVAASLVIVSYS). The N-linked (GlcNAc...) asparagine glycan is linked to N54. FAD contacts are provided by G75, E94, A95, R102, M122, and R123. L-glutamate is bound at residue R123. Residue R123 coordinates L-glutamine. R123 lines the L-lysine pocket. R123 serves as a coordination point for L-phenylalanine. N-linked (GlcNAc...) asparagine glycosylation is found at N164, N193, and N331. Residue V334 participates in FAD binding. Residue Y457 coordinates L-glutamate. Residue Y457 participates in L-glutamine binding. Y457 serves as a coordination point for L-lysine. Y457 is an L-phenylalanine binding site. E551 contributes to the FAD binding site. A558 serves as a coordination point for L-phenylalanine. Residues W559 and V560 each contribute to the FAD site.

The protein belongs to the flavin monoamine oxidase family. FIG1 subfamily. Homodimer. FAD is required as a cofactor. Post-translationally, out of the 4 glycosylated residues, Asn-54 is hypermannosylated. The presence of a hypermannosylated N-glycan on Asn-54 leads to adoption of a more active conformation in the absence of acid activation.

It localises to the secreted. The catalysed reaction is an L-alpha-amino acid + O2 + H2O = a 2-oxocarboxylate + H2O2 + NH4(+). The enzyme catalyses L-lysine + O2 + H2O = 6-amino-2-oxohexanoate + H2O2 + NH4(+). It catalyses the reaction L-glutamate + O2 + H2O = H2O2 + 2-oxoglutarate + NH4(+). It carries out the reaction L-arginine + O2 + H2O = 5-guanidino-2-oxopentanoate + H2O2 + NH4(+). The catalysed reaction is L-leucine + O2 + H2O = 4-methyl-2-oxopentanoate + H2O2 + NH4(+). The enzyme catalyses L-asparagine + O2 + H2O = 2-oxosuccinamate + H2O2 + NH4(+). It catalyses the reaction L-histidine + O2 + H2O = 3-(imidazol-5-yl)pyruvate + H2O2 + NH4(+). It carries out the reaction L-isoleucine + O2 + H2O = (S)-3-methyl-2-oxopentanoate + H2O2 + NH4(+). The catalysed reaction is L-methionine + O2 + H2O = 4-methylsulfanyl-2-oxobutanoate + H2O2 + NH4(+). The enzyme catalyses L-phenylalanine + O2 + H2O = 3-phenylpyruvate + H2O2 + NH4(+). It catalyses the reaction L-tyrosine + O2 + H2O = 3-(4-hydroxyphenyl)pyruvate + H2O2 + NH4(+). It carries out the reaction L-glutamine + O2 + H2O = 2-oxoglutaramate + H2O2 + NH4(+). The catalysed reaction is L-alanine + O2 + H2O = pyruvate + H2O2 + NH4(+). LAAO4 is activated by exposure to acidic pH, the detergent sodium dodecyl sulfate, or freezing. In terms of biological role, catalyzes the oxidative deamination of L-amino acids with molecular oxygen to the corresponding alpha-keto acids and ammonia. L-glutamine shows the highest relative activity but LAAO4 has a broad substrate specificity, including L-amino acids with big aromatic, acidic and basic side chains. Methyl esters of these L-amino acids are also accepted, ethyl esters are converted but with lower activity, whereas D-Amino acids are not converted. No reaction is detected for small polar amino acids such as L-cysteine or L-aspartate, and very little for small, branched hydrophobic amino acids like L-valine. The sequence is that of L-amino-acid oxidase 4 from Hebeloma cylindrosporum.